Consider the following 102-residue polypeptide: Large ribosomal subunit protein bL21 (102 aa).

This sequence belongs to the bacterial ribosomal protein bL21 family. As to quaternary structure, part of the 50S ribosomal subunit. Contacts protein L20.

This protein binds to 23S rRNA in the presence of protein L20. The chain is Large ribosomal subunit protein bL21 from Ehrlichia canis (strain Jake).